The chain runs to 198 residues: MAPARLFALLLLFVGGVAESIRETEVIDPQDLLEGRYFSGALPDDEDVVGPGQESDDFELSGSGDLDDLEDSIIGPEVIHPLVPLDNHIPERAGSGSQVPTEPKKLEENEVIPKRISPIEESEDVSNKVSMSSTVQGSNIFERTEVLAALIVGGIVGILFAVFLILLLMYRMKKKDEGSYDLGKKPIYKKAPTNEFYA.

The first 18 residues, 1–18, serve as a signal peptide directing secretion; it reads MAPARLFALLLLFVGGVA. At 19–145 the chain is on the extracellular side; the sequence is ESIRETEVID…QGSNIFERTE (127 aa). O-linked (Xyl...) (glycosaminoglycan) serine glycosylation is found at Ser-39, Ser-61, and Ser-63. The O-linked (Xyl...) (chondroitin sulfate) serine glycan is linked to Ser-95. Residues 146 to 170 traverse the membrane as a helical segment; the sequence is VLAALIVGGIVGILFAVFLILLLMY. Topologically, residues 171–198 are cytoplasmic; the sequence is RMKKKDEGSYDLGKKPIYKKAPTNEFYA.

It belongs to the syndecan proteoglycan family. In terms of assembly, homodimer. Interacts with CDCP1 and SDCBP. Interacts (via its cytoplasmic domain) with GIPC (via its PDZ domain). Interacts (via its cytoplasmic domain) with NUDT16L1. Interacts with DNM2; this interaction is markedly enhanced at focal ahesion site upon induction of focal adhesions and stress-fiber formation. Shedding is enhanced by a number of factors such as heparanase, thrombin or EGF. Also by stress and wound healing. PMA-mediated shedding is inhibited by TIMP3. In terms of processing, O-glycosylated; contains both chondroitin sulfate and heparan sulfate. Ser-39, Ser-61 and Ser-63 can all be modified by either chondroitin sulfate or heparan sulfate, and the protein exists in forms that contain only chondroitin sulfate, only heparan sulfate and both chondroitin sulfate and heparan sulfate.

The protein resides in the membrane. The protein localises to the secreted. Its function is as follows. Cell surface proteoglycan which regulates exosome biogenesis in concert with SDCBP and PDCD6IP. The chain is Syndecan-4 from Pongo abelii (Sumatran orangutan).